The primary structure comprises 117 residues: Large ribosomal subunit protein bL20 (117 aa).

The protein belongs to the bacterial ribosomal protein bL20 family.

Functionally, binds directly to 23S ribosomal RNA and is necessary for the in vitro assembly process of the 50S ribosomal subunit. It is not involved in the protein synthesizing functions of that subunit. The chain is Large ribosomal subunit protein bL20 from Actinobacillus pleuropneumoniae serotype 7 (strain AP76).